Here is a 956-residue protein sequence, read N- to C-terminus: Probable hypoxanthine oxidase XdhD (956 aa).

The Mo-molybdopterin site is built by Q414, F445, and A727.

Belongs to the xanthine dehydrogenase family. The cofactor is [2Fe-2S] cluster. Mo-molybdopterin is required as a cofactor.

Its function is as follows. Probably has no xanthine dehydrogenase activity; however deletion results in increased adenine sensitivity, suggesting that this protein contributes to the conversion of adenine to guanine nucleotides during purine salvage. The protein is Probable hypoxanthine oxidase XdhD (xdhD) of Escherichia coli (strain K12).